Consider the following 1384-residue polypeptide: Protein Gawky (1384 aa).

Disordered stretches follow at residues 1–99 (MREA…VWTG), 148–227 (NGSS…DPRG), 263–335 (TAST…DDGT), and 447–501 (VGAP…SGWS). Residues 1 to 205 (MREALFSQDG…HRGGNGSGAT (205 aa)) are required for interaction with AGO1. 2 sufficient for miRNA-mediated silencing regions span residues 1 to 605 (MREA…SLGS) and 605 to 830 (SYAD…SVHL). Residues 15-24 (HVNQDTNWEV) show a composition bias toward polar residues. Positions 150–171 (SSNITGSSGVATGSSGNSSNAG) are enriched in low complexity. Residues 205–490 (TSSDPRDIRM…GVSWGNKQSK (286 aa)) form a minimal N-terminal region required for miRNA-mediated silencing region. Residues 208–225 (DPRDIRMIDPRDPIRGDP) show a composition bias toward basic and acidic residues. 2 stretches are compositionally biased toward polar residues: residues 449 to 475 (APSS…NSWS) and 485 to 501 (GNKQ…SGWS). Residues 547 to 588 (IIKQSKQYRILVENGFKKEDVERALVIANMNIEEAADMLRAN) enclose the UBA domain. Disordered stretches follow at residues 607-626 (ADHN…PVNS), 809-841 (QNMQ…LRGH), 889-942 (TEFS…NKDW), 962-1022 (EPGK…LSSS), 1052-1102 (TSPL…GVQT), 1188-1221 (SENE…GVGT), and 1318-1368 (GTAN…PSGR). The span at 809–826 (QNMQPTSQQQQPQQQQLP) shows a compositional bias: low complexity. Positions 862–1115 (YQGASNQQSR…NWTGGNTTWG (254 aa)) are not required for interaction with AGO1 or miRNAs or for localization to P-bodies but necessary for miRNA-mediated silencing and for interaction with pAbp. A compositionally biased stretch (polar residues) spans 898–924 (TKQNLTANTSNINSLGLQNDSTWSTGR). A sufficient for miRNA-mediated silencing region spans residues 940 to 1215 (KDWSVAQPTS…TSSSGTSGGN (276 aa)). Residues 1010 to 1022 (SPTDLPPLSLSSS) show a composition bias toward low complexity. Polar residues predominate over residues 1052-1061 (TSPLNKSSSR). Residues 1068–1084 (TANSNKSANSNASTPTT) show a composition bias toward low complexity. The 73-residue stretch at 1117–1189 (SWLLLKNLTA…TTIFAESPSE (73 aa)) folds into the RRM domain. Over residues 1188–1203 (SENEVQSIMQHLPQTP) the composition is skewed to polar residues. Positions 1200 to 1384 (PQTPSSTSSS…ISLVYSIVDD (185 aa)) are not required for interaction with AGO1 or miRNAs or for localization to P-bodies but necessary for miRNA-mediated silencing, dissociation from AGO1 and miRNAs and interaction with pAbp. Over residues 1211 to 1220 (TSGGNVGGVG) the composition is skewed to gly residues. Low complexity predominate over residues 1318–1349 (GTANSSGSKSSANNLASGQSSASNLTNSTNST). The segment covering 1350-1365 (WRQTSQNQALQSQSRP) has biased composition (polar residues).

This sequence belongs to the GW182 family. Component of the miRNA-directed RNA-induced silencing complex (miRISC), composed of at least AGO1 and gw, which bind mature miRNAs and targets the selective destruction of homologous RNAs. Interacts (via N-terminal region) with AGO1 (via Piwi domain); the interaction is essential for localization of AGO1 in P-bodies and for miRNA-mediated silencing. Interacts with pAbp/PABPC1; this interaction interferes with the binding of pAbp to eIF4G and is required for miRNA-mediated silencing. Interacts with CCR4-NOT complex members Not1, Rga/NOT2, twin/CCR4, Pop2 and NOT3/5 and with PAN complex members CG8232/PAN2 and CG11486/PAN3.

The protein resides in the cytoplasm. The protein localises to the P-body. In terms of biological role, required for gene silencing mediated by micro-RNAs (miRNAs). Silences both polyadenylated and deadenylated mRNAs. Required for miRNA-mediated translational repression and mRNA decay. Not required for miRNA target recognition. Necessary to initiate but not to maintain silencing. Promotes mRNA deadenylation through the recruitment of the CCR4-NOT and PAN complexes and promotes decapping by the DCP1-DCP2 complex. Dissociates from silenced mRNAs after deadenylation. Required for completion of nuclear divisions during early embryonic development. This Drosophila melanogaster (Fruit fly) protein is Protein Gawky.